Reading from the N-terminus, the 238-residue chain is Ubiquinone biosynthesis O-methyltransferase (238 aa).

S-adenosyl-L-methionine-binding residues include R39, G58, D79, and M123.

Belongs to the methyltransferase superfamily. UbiG/COQ3 family.

It carries out the reaction a 3-demethylubiquinol + S-adenosyl-L-methionine = a ubiquinol + S-adenosyl-L-homocysteine + H(+). It catalyses the reaction a 3-(all-trans-polyprenyl)benzene-1,2-diol + S-adenosyl-L-methionine = a 2-methoxy-6-(all-trans-polyprenyl)phenol + S-adenosyl-L-homocysteine + H(+). It functions in the pathway cofactor biosynthesis; ubiquinone biosynthesis. Functionally, O-methyltransferase that catalyzes the 2 O-methylation steps in the ubiquinone biosynthetic pathway. The sequence is that of Ubiquinone biosynthesis O-methyltransferase from Hahella chejuensis (strain KCTC 2396).